The sequence spans 757 residues: Mitofusin-2 (757 aa).

At 1–604 the chain is on the cytoplasmic side; that stretch reads MSLLFSRCNS…TQEEFMVSMV (604 aa). Residues 30-94 are part of a helix bundle domain, formed by helices from N-terminal and C-terminal regions; the sequence is KHFVTAKKKI…VRGISEVLAR (65 aa). The Dynamin-type G domain maps to 93–342; the sequence is ARRHMKVAFF…VRMFEFQNFE (250 aa). The segment at 103–110 is G1 motif; the sequence is GRTSNGKS. 106-111 is a binding site for GTP; sequence SNGKST. A Phosphothreonine; by PINK1 modification is found at T111. The segment at 129–130 is G2 motif; it reads TT. The tract at residues 199–202 is G3 motif; that stretch reads DSPG. 258-261 provides a ligand contact to GTP; it reads NRWD. The tract at residues 258-261 is G4 motif; the sequence is NRWD. E288 is a region of interest (G5 motif). GTP contacts are provided by S305 and K307. The segment at 359 to 385 is part of a helix bundle domain, formed by helices from N-terminal and C-terminal regions; that stretch reads EQHTVRAKQIAEAVRLIMDSLHMAARE. Positions 391 to 434 form a coiled coil; it reads EEMREERQDRLKFIDKQLELLAQDYKLRIKQITEEVERQVSTAM. The residue at position 442 (S442) is a Phosphoserine; by PINK1. The helical transmembrane segment at 605–625 threads the bilayer; the sequence is TGLASLTSRTSMGILVVGGVV. W626 is a topological domain (mitochondrial intermembrane). A helical membrane pass occupies residues 627–647; that stretch reads KAVGWRLIALSFGLYGLLYVY. Over 648-757 the chain is Cytoplasmic; it reads ERLTWTTKAK…FTHQYLQPSR (110 aa). Positions 695–738 form a coiled coil; it reads TFAHLCQQVDVTRENLEQEIAAMNKKIEVLDSLQSKAKLLRNKA. The tract at residues 722–753 is part of a helix bundle domain, formed by helices from N-terminal and C-terminal regions; that stretch reads EVLDSLQSKAKLLRNKAGWLDSELNMFTHQYL.

Belongs to the TRAFAC class dynamin-like GTPase superfamily. Dynamin/Fzo/YdjA family. Mitofusin subfamily. As to quaternary structure, forms homomultimers and heteromultimers with MFN1. Oligomerization is essential for mitochondrion fusion. Interacts with VAT1. Interacts with STOML2; may form heterooligomers. Interacts (phosphorylated) with PRKN. Interacts with EIF2AK3. Interacts with THG1L; THG1L probably functions as a guanyl-nucleotide exchange factor/GEF, activating MFN2. Post-translationally, phosphorylated by PINK1. In terms of processing, ubiquitinated by non-degradative ubiquitin by PRKN, promoting mitochondrial fusion; deubiquitination by USP30 inhibits mitochondrial fusion. Ubiquitinated by HUWE1 when dietary stearate (C18:0) levels are low; ubiquitination inhibits mitochondrial fusion. As to expression, ubiquitous; expressed at low level. Highly expressed in heart and kidney.

It is found in the mitochondrion outer membrane. It carries out the reaction GTP + H2O = GDP + phosphate + H(+). Functionally, mitochondrial outer membrane GTPase that mediates mitochondrial clustering and fusion. Mitochondria are highly dynamic organelles, and their morphology is determined by the equilibrium between mitochondrial fusion and fission events. Overexpression induces the formation of mitochondrial networks. Membrane clustering requires GTPase activity and may involve a major rearrangement of the coiled coil domains. Plays a central role in mitochondrial metabolism and may be associated with obesity and/or apoptosis processes. Plays an important role in the regulation of vascular smooth muscle cell proliferation. Involved in the clearance of damaged mitochondria via selective autophagy (mitophagy). Is required for PRKN recruitment to dysfunctional mitochondria. Involved in the control of unfolded protein response (UPR) upon ER stress including activation of apoptosis and autophagy during ER stress. Acts as an upstream regulator of EIF2AK3 and suppresses EIF2AK3 activation under basal conditions. In Homo sapiens (Human), this protein is Mitofusin-2.